Consider the following 588-residue polypeptide: Tetratricopeptide repeat protein 39B (588 aa).

TPR repeat units follow at residues 294–327 (SIIL…QQEW), 485–518 (CLVQ…EKRV), and 526–559 (PFTF…YKDY).

The protein belongs to the TTC39 family.

Its function is as follows. May be involved in lipid metabolism. The polypeptide is Tetratricopeptide repeat protein 39B (ttc39b) (Xenopus tropicalis (Western clawed frog)).